Here is a 92-residue protein sequence, read N- to C-terminus: Large ribosomal subunit protein eL43 (92 aa).

Residues Cys-39, Cys-42, Cys-57, and Cys-60 each contribute to the Zn(2+) site. A C4-type zinc finger spans residues 39 to 60; that stretch reads CPVCGFPKLKRASTSIWVCGKC.

Belongs to the eukaryotic ribosomal protein eL43 family. Putative zinc-binding subfamily. In terms of assembly, part of the 50S ribosomal subunit. Requires Zn(2+) as cofactor.

In terms of biological role, binds to the 23S rRNA. The polypeptide is Large ribosomal subunit protein eL43 (Methanocaldococcus jannaschii (strain ATCC 43067 / DSM 2661 / JAL-1 / JCM 10045 / NBRC 100440) (Methanococcus jannaschii)).